Consider the following 242-residue polypeptide: DNA repair protein RecO (242 aa).

It belongs to the RecO family. In terms of assembly, monomer.

Involved in DNA repair and RecF pathway recombination. This Shigella boydii serotype 18 (strain CDC 3083-94 / BS512) protein is DNA repair protein RecO.